The sequence spans 407 residues: Probable tRNA pseudouridine synthase D (407 aa).

Asp81 functions as the Nucleophile in the catalytic mechanism. In terms of domain architecture, TRUD spans Gly151–Arg372.

Belongs to the pseudouridine synthase TruD family.

It carries out the reaction uridine(13) in tRNA = pseudouridine(13) in tRNA. In terms of biological role, could be responsible for synthesis of pseudouridine from uracil-13 in transfer RNAs. This Pyrococcus furiosus (strain ATCC 43587 / DSM 3638 / JCM 8422 / Vc1) protein is Probable tRNA pseudouridine synthase D.